The primary structure comprises 344 residues: tRNA N6-adenosine threonylcarbamoyltransferase (344 aa).

Residues H111 and H115 each contribute to the Fe cation site. Residues 133-137, D166, G179, and N283 contribute to the substrate site; that span reads LVSGG. D311 contacts Fe cation.

It belongs to the KAE1 / TsaD family. The cofactor is Fe(2+).

It is found in the cytoplasm. It catalyses the reaction L-threonylcarbamoyladenylate + adenosine(37) in tRNA = N(6)-L-threonylcarbamoyladenosine(37) in tRNA + AMP + H(+). Its function is as follows. Required for the formation of a threonylcarbamoyl group on adenosine at position 37 (t(6)A37) in tRNAs that read codons beginning with adenine. Is involved in the transfer of the threonylcarbamoyl moiety of threonylcarbamoyl-AMP (TC-AMP) to the N6 group of A37, together with TsaE and TsaB. TsaD likely plays a direct catalytic role in this reaction. The polypeptide is tRNA N6-adenosine threonylcarbamoyltransferase (Orientia tsutsugamushi (strain Boryong) (Rickettsia tsutsugamushi)).